A 376-amino-acid chain; its full sequence is Gibberellic acid methyltransferase 1 (376 aa).

Residues tyrosine 22, cysteine 64, asparagine 69, aspartate 104, leucine 105, serine 136, and phenylalanine 137 each contribute to the S-adenosyl-L-homocysteine site. Tryptophan 158 provides a ligand contact to gibberellin A9. Residues asparagine 175, valine 179, arginine 265, aspartate 266, phenylalanine 268, and asparagine 269 each coordinate Mg(2+).

It belongs to the methyltransferase superfamily. Type-7 methyltransferase family. SABATH subfamily. The cofactor is Mg(2+). In terms of tissue distribution, expressed in siliques, developing seeds, anthers and germinating seeds. Not detected in leaves, stems, flowers and roots.

The catalysed reaction is gibberellin A9 + S-adenosyl-L-methionine = O-methyl gibberellin A9 + S-adenosyl-L-homocysteine. Up-regulated by K(+) and NH(4+), down-regulated by Zn(2+), Cu(2+), Fe(2+) and Fe(3+). In terms of biological role, methylates the carboxyl group of several gibberellins (GAs). Substrate preference is GA9 &gt; GA20 &gt; GA3 &gt; GA4 &gt; GA34 &gt; GA51 &gt; GA1 &gt; GA19 &gt; GA12. No activity with diterpenes abietic acid and ent-kaurenoic acid. The chain is Gibberellic acid methyltransferase 1 (GAMT1) from Arabidopsis thaliana (Mouse-ear cress).